Consider the following 438-residue polypeptide: 3-phosphoshikimate 1-carboxyvinyltransferase (438 aa).

Positions 23, 24, and 28 each coordinate 3-phosphoshikimate. K23 contributes to the phosphoenolpyruvate binding site. Phosphoenolpyruvate contacts are provided by G94 and R122. 3-phosphoshikimate-binding residues include S167, Q169, D321, and K348. Residue Q169 participates in phosphoenolpyruvate binding. Catalysis depends on D321, which acts as the Proton acceptor. Phosphoenolpyruvate contacts are provided by R352 and R393.

Belongs to the EPSP synthase family. Monomer.

Its subcellular location is the cytoplasm. It carries out the reaction 3-phosphoshikimate + phosphoenolpyruvate = 5-O-(1-carboxyvinyl)-3-phosphoshikimate + phosphate. It participates in metabolic intermediate biosynthesis; chorismate biosynthesis; chorismate from D-erythrose 4-phosphate and phosphoenolpyruvate: step 6/7. In terms of biological role, catalyzes the transfer of the enolpyruvyl moiety of phosphoenolpyruvate (PEP) to the 5-hydroxyl of shikimate-3-phosphate (S3P) to produce enolpyruvyl shikimate-3-phosphate and inorganic phosphate. This is 3-phosphoshikimate 1-carboxyvinyltransferase from Helicobacter hepaticus (strain ATCC 51449 / 3B1).